The sequence spans 400 residues: Probable aspartate/prephenate aminotransferase (400 aa).

Gly-39, Trp-125, and Asn-175 together coordinate L-aspartate. Lys-239 carries the N6-(pyridoxal phosphate)lysine modification. Arg-375 lines the L-aspartate pocket.

This sequence belongs to the class-I pyridoxal-phosphate-dependent aminotransferase family. Homodimer. Pyridoxal 5'-phosphate is required as a cofactor.

Its subcellular location is the cytoplasm. The catalysed reaction is L-aspartate + 2-oxoglutarate = oxaloacetate + L-glutamate. It catalyses the reaction L-arogenate + 2-oxoglutarate = prephenate + L-glutamate. In terms of biological role, catalyzes the reversible conversion of aspartate and 2-oxoglutarate to glutamate and oxaloacetate. Can also transaminate prephenate in the presence of glutamate. The chain is Probable aspartate/prephenate aminotransferase (aspC) from Rhizobium leguminosarum bv. phaseoli.